Consider the following 434-residue polypeptide: Putative DD-carboxypeptidase TP_0574 (434 aa).

The signal sequence occupies residues 1–19 (MKVKYALLSAGALQLLVVG). Cys-20 carries the N-palmitoyl cysteine lipid modification. The S-diacylglycerol cysteine moiety is linked to residue Cys-20.

As to quaternary structure, probably a monomer; a non-lipidated construct (residues 22-434) is monomeric in solution but crystallizes as a homodimer. Zn(2+) is required as a cofactor. Post-translationally, the N-terminus is blocked. Present as a doublet of low abundance 48 kDa and high abundance 47 kDa proteins. The longer form is probably due to readthrough of the stop codon; the extra amino acids at the C-terminus would be X-Lys-Arg-Gly-Val-Leu-Ser-Arg-Val-Ser, a peptide antibody against this sequence detects only the 48 kDa form.

The protein localises to the cell inner membrane. In terms of biological role, a possible D,D-carboxypeptidase, that releases amino acids sequentially from a proteins C-terminus. Has zinc-dependent carboxypeptidase activity on synthetic depsipeptide substrates. May serve to decrease cross-linking of peptidoglycan, promoting the highly sinusous motility of this spirochaete. Overexpression of the whole protein in E.coli leads to aberrant cell morphology and extrusion of the cytoplasm, while overexpression of a construct with the first 62 resides of the protein fused to PhoA does have this effect, suggesting the whole protein, not the lipoprotein moiety, is toxic. Binds penicillin. Penicillin binding is covalent, does not require lipidation, and is zinc-dependent. While this protein has beta-lactamase activity in vitro, that is probably not its role in vivo, as T.pallidum is very sensitive to penicillin antibiotics. A pathogen-specific membrane antigen. Most abundant of the membrane lipoproteins, only found in pathogenic treponemes, suggesting that it is an important structural moiety in the cell envelope of virulent treponemal subspecies. A lipopeptide corresponding to the first 6 mature residues induces host (human and mouse) cytokine release by monocyte cell lines via TLR2 and CD14; nonlipidated protein does not stimulate host cells. Stimulates host (human) dendritic cell maturation to become MHC class II-positive antigen presenting cells via TLR2, which depends on lipidation; nonlipidated protein does not stimulate maturation. This Treponema pallidum (strain Nichols) protein is Putative DD-carboxypeptidase TP_0574.